The following is a 335-amino-acid chain: GTPase Obg (335 aa).

One can recognise an Obg domain in the interval 1-158 (MFVDQITLEL…RQVELELKLI (158 aa)). Residues 126 to 145 (NTFFKTSVNRAPTKATPGKP) form a disordered region. The 176-residue stretch at 159 to 334 (ADIGLVGFPN…LYRFFTQRLA (176 aa)) folds into the OBG-type G domain. GTP contacts are provided by residues 165 to 172 (GFPNAGKS), 190 to 194 (FTTLA), 215 to 218 (DIPG), 285 to 288 (NKID), and 315 to 317 (SGL). Mg(2+) contacts are provided by serine 172 and threonine 192.

It belongs to the TRAFAC class OBG-HflX-like GTPase superfamily. OBG GTPase family. As to quaternary structure, monomer. Requires Mg(2+) as cofactor.

The protein resides in the cytoplasm. An essential GTPase which binds GTP, GDP and possibly (p)ppGpp with moderate affinity, with high nucleotide exchange rates and a fairly low GTP hydrolysis rate. Plays a role in control of the cell cycle, stress response, ribosome biogenesis and in those bacteria that undergo differentiation, in morphogenesis control. This is GTPase Obg from Chlamydia pneumoniae (Chlamydophila pneumoniae).